Here is a 291-residue protein sequence, read N- to C-terminus: Light-independent protochlorophyllide reductase iron-sulfur ATP-binding protein (291 aa).

ATP is bound by residues 10–15 and Lys39; that span reads GIGKST. Residue Ser14 coordinates Mg(2+). Cys95 and Cys129 together coordinate [4Fe-4S] cluster. 180–181 serves as a coordination point for ATP; that stretch reads NR.

Belongs to the NifH/BchL/ChlL family. In terms of assembly, homodimer. Protochlorophyllide reductase is composed of three subunits; ChlL, ChlN and ChlB. It depends on [4Fe-4S] cluster as a cofactor.

The protein resides in the plastid. Its subcellular location is the chloroplast. It catalyses the reaction chlorophyllide a + oxidized 2[4Fe-4S]-[ferredoxin] + 2 ADP + 2 phosphate = protochlorophyllide a + reduced 2[4Fe-4S]-[ferredoxin] + 2 ATP + 2 H2O. It functions in the pathway porphyrin-containing compound metabolism; chlorophyll biosynthesis (light-independent). In terms of biological role, component of the dark-operative protochlorophyllide reductase (DPOR) that uses Mg-ATP and reduced ferredoxin to reduce ring D of protochlorophyllide (Pchlide) to form chlorophyllide a (Chlide). This reaction is light-independent. The L component serves as a unique electron donor to the NB-component of the complex, and binds Mg-ATP. In Pinus contorta (Shore pine), this protein is Light-independent protochlorophyllide reductase iron-sulfur ATP-binding protein.